We begin with the raw amino-acid sequence, 291 residues long: 4-hydroxy-tetrahydrodipicolinate synthase (291 aa).

Pyruvate is bound at residue Thr45. The Proton donor/acceptor role is filled by Tyr133. Lys161 serves as the catalytic Schiff-base intermediate with substrate. Position 203 (Ile203) interacts with pyruvate.

It belongs to the DapA family. As to quaternary structure, homotetramer; dimer of dimers.

It localises to the cytoplasm. The catalysed reaction is L-aspartate 4-semialdehyde + pyruvate = (2S,4S)-4-hydroxy-2,3,4,5-tetrahydrodipicolinate + H2O + H(+). Its pathway is amino-acid biosynthesis; L-lysine biosynthesis via DAP pathway; (S)-tetrahydrodipicolinate from L-aspartate: step 3/4. In terms of biological role, catalyzes the condensation of (S)-aspartate-beta-semialdehyde [(S)-ASA] and pyruvate to 4-hydroxy-tetrahydrodipicolinate (HTPA). The polypeptide is 4-hydroxy-tetrahydrodipicolinate synthase (Teredinibacter turnerae (strain ATCC 39867 / T7901)).